Reading from the N-terminus, the 155-residue chain is MDYEIRQAEKRNIAGFHMVGPWEKTVKQGFEQLMMWVDGNQVVPLEWIAVYYDNPDEVPAEKLRCDTVVSVPDNFTIPKNSEGVILTEIAGGQYATAVARVENHDFATPWYQFFNSLLQDNHYQIAAKPCFEVYLNNGTEDGYWDIEMYVPVQSK.

The protein belongs to the DNA gyrase inhibitor family. Interacts with DNA gyrase.

The protein localises to the cytoplasm. In terms of biological role, inhibits the supercoiling activity of DNA gyrase. Acts by inhibiting DNA gyrase at an early step, prior to (or at the step of) binding of DNA by the gyrase. It protects cells against toxins that target DNA gyrase, by inhibiting activity of these toxins and reducing the formation of lethal double-strand breaks in the cell. The sequence is that of DNA gyrase inhibitor from Citrobacter koseri (strain ATCC BAA-895 / CDC 4225-83 / SGSC4696).